The following is a 310-amino-acid chain: Dermonecrotic toxin LiSicTox-alphaII2 (310 aa).

The first 18 residues, 1–18, serve as a signal peptide directing secretion; it reads MLLRIALILGCWSILSEG. A propeptide spanning residues 19–26 is cleaved from the precursor; the sequence is AENDIAER. His38 is an active-site residue. Residues Glu58 and Asp60 each coordinate Mg(2+). Residue His74 is the Nucleophile of the active site. Disulfide bonds link Cys78–Cys84 and Cys80–Cys224. Residue Asn99 is glycosylated (N-linked (GlcNAc...) asparagine). A Mg(2+)-binding site is contributed by Asp118.

It belongs to the arthropod phospholipase D family. Class II subfamily. The cofactor is Mg(2+). Expressed by the venom gland.

Its subcellular location is the secreted. It catalyses the reaction an N-(acyl)-sphingosylphosphocholine = an N-(acyl)-sphingosyl-1,3-cyclic phosphate + choline. The enzyme catalyses an N-(acyl)-sphingosylphosphoethanolamine = an N-(acyl)-sphingosyl-1,3-cyclic phosphate + ethanolamine. The catalysed reaction is a 1-acyl-sn-glycero-3-phosphocholine = a 1-acyl-sn-glycero-2,3-cyclic phosphate + choline. It carries out the reaction a 1-acyl-sn-glycero-3-phosphoethanolamine = a 1-acyl-sn-glycero-2,3-cyclic phosphate + ethanolamine. In terms of biological role, dermonecrotic toxins cleave the phosphodiester linkage between the phosphate and headgroup of certain phospholipids (sphingolipid and lysolipid substrates), forming an alcohol (often choline) and a cyclic phosphate. This toxin acts on sphingomyelin (SM). It may also act on ceramide phosphoethanolamine (CPE), lysophosphatidylcholine (LPC) and lysophosphatidylethanolamine (LPE), but not on lysophosphatidylserine (LPS), and lysophosphatidylglycerol (LPG). It acts by transphosphatidylation, releasing exclusively cyclic phosphate products as second products. Induces dermonecrosis, hemolysis, increased vascular permeability, edema, inflammatory response, and platelet aggregation. The sequence is that of Dermonecrotic toxin LiSicTox-alphaII2 from Loxosceles intermedia (Brown spider).